The primary structure comprises 340 residues: Lysophospholipase L2 (340 aa).

Its subcellular location is the cell inner membrane. The catalysed reaction is a 1-acyl-sn-glycero-3-phosphocholine + H2O = sn-glycerol 3-phosphocholine + a fatty acid + H(+). The polypeptide is Lysophospholipase L2 (pldB) (Escherichia coli O6:H1 (strain CFT073 / ATCC 700928 / UPEC)).